Here is a 163-residue protein sequence, read N- to C-terminus: Large ribosomal subunit protein uL18 (163 aa).

It belongs to the universal ribosomal protein uL18 family. As to quaternary structure, part of the 50S ribosomal subunit. Contacts the 5S and 23S rRNAs.

In terms of biological role, this is one of the proteins that bind and probably mediate the attachment of the 5S RNA into the large ribosomal subunit, where it forms part of the central protuberance. This Thermoplasma acidophilum (strain ATCC 25905 / DSM 1728 / JCM 9062 / NBRC 15155 / AMRC-C165) protein is Large ribosomal subunit protein uL18.